The chain runs to 287 residues: PAK4-inhibitor INKA1 (287 aa).

Disordered regions lie at residues 22-59 and 138-157; these read GRDTGSPSMPGPLQPTSQTGPDVQPSHQLRASGALEED and SRAPVASVPPVHHPRPKSTP. The segment covering 35-50 has biased composition (polar residues); sequence QPTSQTGPDVQPSHQL. Positions 138 to 147 are enriched in low complexity; sequence SRAPVASVPP. Inka box stretches follow at residues 168-205 and 261-287; these read EAEDWTAALLNRGRSRQPLVLGDNCFADLVHNWMELPE and PADVSRFAALMSCRSRQPIICNDVSYL.

This sequence belongs to the INKA family. Interacts with PAK4.

The protein localises to the nucleus. Its subcellular location is the cytoplasm. Its function is as follows. Inhibitor of the serine/threonine-protein kinase PAK4. Acts by binding PAK4 in a substrate-like manner, inhibiting the protein kinase activity. The chain is PAK4-inhibitor INKA1 from Homo sapiens (Human).